Here is a 198-residue protein sequence, read N- to C-terminus: Transcription factor LBX2 (198 aa).

Disordered regions lie at residues 24-46 (MVPR…SPLC), 63-89 (ALQP…RKSR), and 173-198 (DPGL…QVDD). The segment at residues 85-144 (RRKSRTAFTAQQVLELERRFVFQKYLAPSERDGLATRLGLANAQVVTWFQNRRAKLKRDV) is a DNA-binding region (homeobox).

It localises to the nucleus. Transcription factor. The protein is Transcription factor LBX2 (LBX2) of Homo sapiens (Human).